Here is a 401-residue protein sequence, read N- to C-terminus: L-rhamnonate dehydratase (401 aa).

The substrate site is built by His-29 and Arg-55. Residues Asp-222, Glu-248, and Glu-276 each contribute to the Mg(2+) site. His-325 (proton acceptor) is an active-site residue. Residue Glu-345 coordinates substrate.

This sequence belongs to the mandelate racemase/muconate lactonizing enzyme family. RhamD subfamily. As to quaternary structure, homooctamer; tetramer of dimers. It depends on Mg(2+) as a cofactor.

The catalysed reaction is L-rhamnonate = 2-dehydro-3-deoxy-L-rhamnonate + H2O. Its function is as follows. Catalyzes the dehydration of L-rhamnonate to 2-keto-3-deoxy-L-rhamnonate (KDR). The polypeptide is L-rhamnonate dehydratase (Salmonella heidelberg (strain SL476)).